Consider the following 209-residue polypeptide: Orotate phosphoribosyltransferase (209 aa).

Residues Arg-98, Lys-102, His-104, and 124 to 132 (EDLISTGKS) each bind 5-phospho-alpha-D-ribose 1-diphosphate. Ser-128 serves as a coordination point for orotate.

This sequence belongs to the purine/pyrimidine phosphoribosyltransferase family. PyrE subfamily. As to quaternary structure, homodimer. Requires Mg(2+) as cofactor.

It catalyses the reaction orotidine 5'-phosphate + diphosphate = orotate + 5-phospho-alpha-D-ribose 1-diphosphate. It participates in pyrimidine metabolism; UMP biosynthesis via de novo pathway; UMP from orotate: step 1/2. In terms of biological role, catalyzes the transfer of a ribosyl phosphate group from 5-phosphoribose 1-diphosphate to orotate, leading to the formation of orotidine monophosphate (OMP). The protein is Orotate phosphoribosyltransferase of Malacoplasma penetrans (strain HF-2) (Mycoplasma penetrans).